The primary structure comprises 460 residues: UDP-N-acetylmuramoylalanine--D-glutamate ligase (460 aa).

Position 115–121 (115–121 (GTDGKTT)) interacts with ATP.

Belongs to the MurCDEF family.

The protein resides in the cytoplasm. It carries out the reaction UDP-N-acetyl-alpha-D-muramoyl-L-alanine + D-glutamate + ATP = UDP-N-acetyl-alpha-D-muramoyl-L-alanyl-D-glutamate + ADP + phosphate + H(+). The protein operates within cell wall biogenesis; peptidoglycan biosynthesis. Its function is as follows. Cell wall formation. Catalyzes the addition of glutamate to the nucleotide precursor UDP-N-acetylmuramoyl-L-alanine (UMA). This chain is UDP-N-acetylmuramoylalanine--D-glutamate ligase, found in Chlorobium luteolum (strain DSM 273 / BCRC 81028 / 2530) (Pelodictyon luteolum).